Reading from the N-terminus, the 750-residue chain is Photosystem I P700 chlorophyll a apoprotein A1 (750 aa).

Helical transmembrane passes span 70 to 93 (VFSA…FHGA), 156 to 179 (LYCT…FHYH), 195 to 219 (LNHH…HVSL), 291 to 309 (IAHH…GHMY), 346 to 369 (WHAQ…HHMY), 385 to 411 (LSLF…IFMV), 433 to 455 (AIIS…LYIH), and 531 to 549 (FLVH…LILL). Cysteine 573 and cysteine 582 together coordinate [4Fe-4S] cluster. 2 helical membrane passes run 589-610 (HVFL…HFSW) and 664-686 (LSAY…MFLF). Residue histidine 675 coordinates chlorophyll a'. Positions 683 and 691 each coordinate chlorophyll a. Tryptophan 692 provides a ligand contact to phylloquinone. A helical membrane pass occupies residues 724 to 744 (AVGVTHYLLGGIATTWAFFLA).

It belongs to the PsaA/PsaB family. As to quaternary structure, the PsaA/B heterodimer binds the P700 chlorophyll special pair and subsequent electron acceptors. PSI consists of a core antenna complex that captures photons, and an electron transfer chain that converts photonic excitation into a charge separation. The eukaryotic PSI reaction center is composed of at least 11 subunits. P700 is a chlorophyll a/chlorophyll a' dimer, A0 is one or more chlorophyll a, A1 is one or both phylloquinones and FX is a shared 4Fe-4S iron-sulfur center. is required as a cofactor.

Its subcellular location is the plastid. The protein resides in the chloroplast thylakoid membrane. The enzyme catalyses reduced [plastocyanin] + hnu + oxidized [2Fe-2S]-[ferredoxin] = oxidized [plastocyanin] + reduced [2Fe-2S]-[ferredoxin]. Functionally, psaA and PsaB bind P700, the primary electron donor of photosystem I (PSI), as well as the electron acceptors A0, A1 and FX. PSI is a plastocyanin-ferredoxin oxidoreductase, converting photonic excitation into a charge separation, which transfers an electron from the donor P700 chlorophyll pair to the spectroscopically characterized acceptors A0, A1, FX, FA and FB in turn. Oxidized P700 is reduced on the lumenal side of the thylakoid membrane by plastocyanin. The polypeptide is Photosystem I P700 chlorophyll a apoprotein A1 (Jasminum nudiflorum (Winter jasmine)).